The sequence spans 215 residues: Protein HP-25 homolog 2 (215 aa).

The signal sequence occupies residues methionine 1–alanine 30. A disordered region spans residues valine 35 to glutamate 79. Residues glycine 43 to glycine 76 enclose the Collagen-like domain. Pro residues predominate over residues proline 45 to leucine 68. The 134-residue stretch at leucine 82 to glycine 215 folds into the C1q domain.

The protein localises to the secreted. The sequence is that of Protein HP-25 homolog 2 from Bos taurus (Bovine).